A 314-amino-acid polypeptide reads, in one-letter code: Ribosomal protein uL3 glutamine methyltransferase (314 aa).

This sequence belongs to the protein N5-glutamine methyltransferase family. PrmB subfamily.

The enzyme catalyses L-glutaminyl-[ribosomal protein uL3] + S-adenosyl-L-methionine = N(5)-methyl-L-glutaminyl-[ribosomal protein uL3] + S-adenosyl-L-homocysteine + H(+). Methylates large ribosomal subunit protein uL3 on a specific glutamine residue. The protein is Ribosomal protein uL3 glutamine methyltransferase of Haemophilus influenzae (strain ATCC 51907 / DSM 11121 / KW20 / Rd).